The following is a 485-amino-acid chain: Cysteine--tRNA ligase (485 aa).

C27 is a Zn(2+) binding site. The 'HIGH' region signature appears at 29 to 39 (ITAYDLCHIGH). Positions 208, 233, and 237 each coordinate Zn(2+). Residues 265 to 269 (KMSKS) carry the 'KMSKS' region motif. Residue K268 coordinates ATP.

Belongs to the class-I aminoacyl-tRNA synthetase family. As to quaternary structure, monomer. It depends on Zn(2+) as a cofactor.

The protein localises to the cytoplasm. The enzyme catalyses tRNA(Cys) + L-cysteine + ATP = L-cysteinyl-tRNA(Cys) + AMP + diphosphate. In Nitratidesulfovibrio vulgaris (strain ATCC 29579 / DSM 644 / CCUG 34227 / NCIMB 8303 / VKM B-1760 / Hildenborough) (Desulfovibrio vulgaris), this protein is Cysteine--tRNA ligase.